Here is a 322-residue protein sequence, read N- to C-terminus: UDP-galactose transporter homolog 1 (322 aa).

Helical transmembrane passes span 4–24 (FMRQLFVCMIGIYGSFLSWAV), 43–63 (ALLSLAQSFMTVLCGLLWNWF), 76–96 (FLGYFSSIAISASLSSYFGYA), 105–125 (TVILGKSCKLLPVIALHVFVY), and 129–149 (FPPHKYLIVTMITAGVSIFSY). A glycan (N-linked (GlcNAc...) asparagine) is linked at asparagine 152. A run of 4 helical transmembrane segments spans residues 164 to 184 (SPIGLLLLFFNLLMDGITNTT), 199 to 219 (MMIAVNLGIACLNGLYLISPF), 250 to 270 (LFIFFTLEKFGSITLVTITLT), and 290 to 310 (IQWLGILLVFLGISLEAGLKI). N-linked (GlcNAc...) asparagine glycans are attached at residues asparagine 313 and asparagine 314.

It belongs to the nucleotide-sugar transporter family. SLC35B subfamily.

The protein resides in the endoplasmic reticulum membrane. In terms of biological role, may be involved in specific transport of UDP-Gal from the cytosol to the Golgi lumen. Involved in the maintenance of optimal conditions for the folding of secretory pathway proteins in the endoplasmic reticulum. This is UDP-galactose transporter homolog 1 (hut1) from Schizosaccharomyces pombe (strain 972 / ATCC 24843) (Fission yeast).